We begin with the raw amino-acid sequence, 295 residues long: 4-hydroxy-tetrahydrodipicolinate synthase (295 aa).

Thr-45 is a pyruvate binding site. Tyr-131 acts as the Proton donor/acceptor in catalysis. The Schiff-base intermediate with substrate role is filled by Lys-159. Val-202 is a binding site for pyruvate.

The protein belongs to the DapA family. As to quaternary structure, homotetramer; dimer of dimers.

The protein resides in the cytoplasm. It carries out the reaction L-aspartate 4-semialdehyde + pyruvate = (2S,4S)-4-hydroxy-2,3,4,5-tetrahydrodipicolinate + H2O + H(+). The protein operates within amino-acid biosynthesis; L-lysine biosynthesis via DAP pathway; (S)-tetrahydrodipicolinate from L-aspartate: step 3/4. Its function is as follows. Catalyzes the condensation of (S)-aspartate-beta-semialdehyde [(S)-ASA] and pyruvate to 4-hydroxy-tetrahydrodipicolinate (HTPA). The protein is 4-hydroxy-tetrahydrodipicolinate synthase of Methanothrix thermoacetophila (strain DSM 6194 / JCM 14653 / NBRC 101360 / PT) (Methanosaeta thermophila).